The following is a 400-amino-acid chain: Methylthioribose kinase (400 aa).

Residues asparagine 40, lysine 57, and glutamate 111–leucine 113 contribute to the ATP site. Residue aspartate 229 coordinates substrate. Aspartate 246–glutamate 248 is an ATP binding site. Position 344 (arginine 344) interacts with substrate.

It belongs to the methylthioribose kinase family. Homodimer.

The enzyme catalyses 5-(methylsulfanyl)-D-ribose + ATP = 5-(methylsulfanyl)-alpha-D-ribose 1-phosphate + ADP + H(+). Its pathway is amino-acid biosynthesis; L-methionine biosynthesis via salvage pathway; S-methyl-5-thio-alpha-D-ribose 1-phosphate from S-methyl-5'-thioadenosine (hydrolase route): step 2/2. Catalyzes the phosphorylation of methylthioribose into methylthioribose-1-phosphate. In Pectobacterium atrosepticum (strain SCRI 1043 / ATCC BAA-672) (Erwinia carotovora subsp. atroseptica), this protein is Methylthioribose kinase.